A 107-amino-acid polypeptide reads, in one-letter code: UPF0060 membrane protein mll7841 (107 aa).

4 consecutive transmembrane segments (helical) span residues 4–24 (LFYT…WAWW), 30–50 (PLWL…LALV), 60–80 (AAYG…VEGV), and 87–107 (LAGA…PRGA).

Belongs to the UPF0060 family.

It localises to the cell inner membrane. This chain is UPF0060 membrane protein mll7841, found in Mesorhizobium japonicum (strain LMG 29417 / CECT 9101 / MAFF 303099) (Mesorhizobium loti (strain MAFF 303099)).